Here is a 223-residue protein sequence, read N- to C-terminus: MKPVLQGALAWIYAGYKTASRGHLLPYTRHQKFHSSSLISEQAKRAKDLIKLVNSSSLSNSESQSLDWRSDLKVPEWKRQKLALKDKFKGQQWNPKKKLSREQMENVRLLKRHFPETSATELSERFQVSPEVIRRILKSKWQPNEEEQLQLQTRWKRRSERVNEILGSPEHQKLPPKKLVLGSGRTDTDLQVKSVRRTAVKAGRNSSSPKGKQKLNLLSKLIS.

The disordered stretch occupies residues 166 to 223 (LGSPEHQKLPPKKLVLGSGRTDTDLQVKSVRRTAVKAGRNSSSPKGKQKLNLLSKLIS).

This sequence belongs to the RRG9 family.

It localises to the mitochondrion. Required for respiratory activity and maintenance and expression of the mitochondrial genome. This is Required for respiratory growth protein 9, mitochondrial (RRG9) from Lachancea thermotolerans (strain ATCC 56472 / CBS 6340 / NRRL Y-8284) (Yeast).